A 318-amino-acid polypeptide reads, in one-letter code: Acetyl-coenzyme A carboxylase carboxyl transferase subunit alpha (318 aa).

The CoA carboxyltransferase C-terminal domain maps to 38–292 (KLEKRLAKLE…NKTITKSLHA (255 aa)).

It belongs to the AccA family. Acetyl-CoA carboxylase is a heterohexamer composed of biotin carboxyl carrier protein (AccB), biotin carboxylase (AccC) and two subunits each of ACCase subunit alpha (AccA) and ACCase subunit beta (AccD).

It is found in the cytoplasm. The enzyme catalyses N(6)-carboxybiotinyl-L-lysyl-[protein] + acetyl-CoA = N(6)-biotinyl-L-lysyl-[protein] + malonyl-CoA. Its pathway is lipid metabolism; malonyl-CoA biosynthesis; malonyl-CoA from acetyl-CoA: step 1/1. Its function is as follows. Component of the acetyl coenzyme A carboxylase (ACC) complex. First, biotin carboxylase catalyzes the carboxylation of biotin on its carrier protein (BCCP) and then the CO(2) group is transferred by the carboxyltransferase to acetyl-CoA to form malonyl-CoA. The protein is Acetyl-coenzyme A carboxylase carboxyl transferase subunit alpha of Listeria monocytogenes serotype 4b (strain CLIP80459).